Reading from the N-terminus, the 308-residue chain is Putative S-adenosyl-L-methionine-dependent methyltransferase MAB_4585c (308 aa).

S-adenosyl-L-methionine-binding positions include aspartate 131 and 160-161 (DL).

The protein belongs to the UPF0677 family.

Exhibits S-adenosyl-L-methionine-dependent methyltransferase activity. In Mycobacteroides abscessus (strain ATCC 19977 / DSM 44196 / CCUG 20993 / CIP 104536 / JCM 13569 / NCTC 13031 / TMC 1543 / L948) (Mycobacterium abscessus), this protein is Putative S-adenosyl-L-methionine-dependent methyltransferase MAB_4585c.